A 583-amino-acid chain; its full sequence is Complement factor I (583 aa).

An N-terminal signal peptide occupies residues M1–C18. Intrachain disulfides connect C33–C255, C43–C54, C48–C59, C61–C93, C67–C86, C75–C106, C141–C181, C154–C214, C186–C196, C229–C247, C241–C256, C259–C271, C266–C284, C278–C293, C327–C453, C365–C381, and C373–C444. The region spanning I55 to A108 is the Kazal-like domain. N70 is a glycosylation site (N-linked (GlcNAc...) asparagine). N-linked (GlcNAc...) (complex) asparagine glycosylation is present at N103. The region spanning V114 to V212 is the SRCR domain. N-linked (GlcNAc...) asparagine glycosylation is present at N177. LDL-receptor class A domains follow at residues V213 to K257 and A258 to A294. Positions 239, 242, 244, 246, 252, and 253 each coordinate Ca(2+). Residues Y276, N279, E281, D283, D289, and E290 each coordinate Ca(2+). The Peptidase S1 domain occupies I340–G574. Residues H380 and D429 each act as charge relay system in the active site. N-linked (GlcNAc...) asparagine glycosylation is found at N464 and N494. Disulfide bonds link C467–C531, C495–C510, and C521–C550. The active-site Charge relay system is the S525. N-linked (GlcNAc...) asparagine glycosylation is present at N536.

This sequence belongs to the peptidase S1 family. In terms of assembly, heterodimer of a light and heavy chains; disulfide-linked. The fully processed and mature protein circulates as a zymogen, and is allosterically activated by substrate-induced remodeling of the active site. Interacts with C3b. Interacts with complement factor H. (Microbial infection) Interacts with Staphylococcus aureus clumping factor A/ClfA; this interaction enhances cleavage of C3b into iC3b by CFI. As to expression, expressed in the liver by hepatocytes. Also present in other cells such as monocytes, fibroblasts or keratinocytes.

It localises to the secreted. The protein resides in the extracellular space. It catalyses the reaction Inactivates complement subcomponents C3b, iC3b and C4b by proteolytic cleavage.. Its function is as follows. Trypsin-like serine protease that plays an essential role in regulating the immune response by controlling all complement pathways. Inhibits these pathways by cleaving three peptide bonds in the alpha-chain of C3b and two bonds in the alpha-chain of C4b thereby inactivating these proteins. Essential cofactors for these reactions include factor H and C4BP in the fluid phase and membrane cofactor protein/CD46 and CR1 on cell surfaces. The presence of these cofactors on healthy cells allows degradation of deposited C3b by CFI in order to prevent undesired complement activation, while in apoptotic cells or microbes, the absence of such cofactors leads to C3b-mediated complement activation and subsequent opsonization. This chain is Complement factor I (CFI), found in Homo sapiens (Human).